Consider the following 438-residue polypeptide: Fibrinogen gamma chain (438 aa).

The first 25 residues, 1-25 (MTRLPKQGLLLLQSLALLSSAFGNI), serve as a signal peptide directing secretion. N-linked (GlcNAc...) asparagine glycosylation occurs at Asn76. The 248-residue stretch at 167-414 (QIQEFTGKDC…SVTMKIMPLN (248 aa)) folds into the Fibrinogen C-terminal domain. Cysteines 176 and 205 form a disulfide. Asp341, Asp343, and Gly347 together coordinate Ca(2+). Cys349 and Cys362 are disulfide-bonded.

As to quaternary structure, heterohexamer; disulfide linked. Contains 2 sets of 3 non-identical chains (alpha, beta and gamma). The 2 heterotrimers are in head to head conformation with the N-termini in a small central domain. In terms of processing, conversion of fibrinogen to fibrin is triggered by thrombin, which cleaves fibrinopeptides A and B from alpha and beta chains, and thus exposes the N-terminal polymerization sites responsible for the formation of the soft clot. The soft clot is converted into the hard clot by factor XIIIA which catalyzes the epsilon-(gamma-glutamyl)lysine cross-linking between gamma chains (stronger) and between alpha chains (weaker) of different monomers.

It is found in the secreted. Its function is as follows. Together with fibrinogen alpha (FGA) and fibrinogen beta (FGB), polymerizes to form an insoluble fibrin matrix. Has a major function in hemostasis as one of the primary components of blood clots. The chain is Fibrinogen gamma chain (fgg) from Xenopus laevis (African clawed frog).